The following is a 255-amino-acid chain: 3-deoxy-manno-octulosonate cytidylyltransferase (255 aa).

It belongs to the KdsB family.

Its subcellular location is the cytoplasm. It catalyses the reaction 3-deoxy-alpha-D-manno-oct-2-ulosonate + CTP = CMP-3-deoxy-beta-D-manno-octulosonate + diphosphate. The protein operates within nucleotide-sugar biosynthesis; CMP-3-deoxy-D-manno-octulosonate biosynthesis; CMP-3-deoxy-D-manno-octulosonate from 3-deoxy-D-manno-octulosonate and CTP: step 1/1. Its pathway is bacterial outer membrane biogenesis; lipopolysaccharide biosynthesis. Functionally, activates KDO (a required 8-carbon sugar) for incorporation into bacterial lipopolysaccharide in Gram-negative bacteria. The chain is 3-deoxy-manno-octulosonate cytidylyltransferase from Glaesserella parasuis serovar 5 (strain SH0165) (Haemophilus parasuis).